The following is a 201-amino-acid chain: ADP-ribosylation factor-related protein 1 (201 aa).

N-acetylmethionine is present on Met-1. Residues 24–31 (GLDNAGKT), 75–79 (DLGGQ), and 134–137 (NKQD) contribute to the GTP site.

The protein belongs to the small GTPase superfamily. Arf family. In terms of assembly, interacts with SYS1.

It localises to the golgi apparatus. The protein resides in the trans-Golgi network. Functionally, trans-Golgi-associated GTPase that regulates protein sorting. Controls the targeting of ARL1 and its effector to the trans-Golgi. Required for the lipidation of chylomicrons in the intestine and required for VLDL lipidation in the liver. This chain is ADP-ribosylation factor-related protein 1 (ARFRP1), found in Pongo abelii (Sumatran orangutan).